A 740-amino-acid chain; its full sequence is Ribosomal protein S6 kinase alpha-3 (740 aa).

Positions 1-38 are disordered; it reads MPLAQLADPWQKMAVESPSDSAENGQQIMDEPMGEEEI. Over residues 18–27 the composition is skewed to polar residues; it reads PSDSAENGQQ. Positions 68 to 327 constitute a Protein kinase 1 domain; it reads FELLKVLGQG…VEEIKRHSFF (260 aa). ATP contacts are provided by residues 74 to 82 and Lys100; that span reads LGQGSFGKV. Asp193 functions as the Proton acceptor in the catalytic mechanism. At Ser227 the chain carries Phosphoserine; by PDPK1. Residues 328–397 form the AGC-kinase C-terminal domain; sequence STIDWNKLYR…VAITSDDESQ (70 aa). Phosphothreonine is present on Thr365. Phosphoserine is present on residues Ser369 and Ser375. The residue at position 386 (Ser386) is a Phosphoserine; by autocatalysis and MAPKAPK2. A Phosphoserine modification is found at Ser415. One can recognise a Protein kinase 2 domain in the interval 422 to 679; the sequence is YEVKEDIGVG…AALVLRHPWI (258 aa). Residues 428–436 and Lys451 contribute to the ATP site; that span reads IGVGSYSVC. At Tyr529 the chain carries Phosphotyrosine; by FGFR3. Asp539 acts as the Proton acceptor in catalysis. Residues Ser556 and Ser715 each carry the phosphoserine modification.

Belongs to the protein kinase superfamily. AGC Ser/Thr protein kinase family. S6 kinase subfamily. As to quaternary structure, forms a complex with either MAPK1/ERK2 or MAPK3/ERK1 in quiescent cells. Transiently dissociates following mitogenic stimulation. Interacts with NFATC4, ETV1/ER81 and FGFR1. It depends on Mg(2+) as a cofactor. In terms of processing, activated by phosphorylation at Ser-227 by PDPK1. Autophosphorylated on Ser-386, as part of the activation process. May be phosphorylated at Thr-365 and Ser-369 by MAPK1/ERK2 and MAPK3/ERK1. Can also be activated via phosphorylation at Ser-386 by MAPKAPK2. N-terminal myristoylation results in an activated kinase in the absence of added growth factors. In terms of tissue distribution, expressed in many tissues, highest levels in skeletal muscle.

Its subcellular location is the nucleus. It localises to the cytoplasm. The catalysed reaction is L-seryl-[protein] + ATP = O-phospho-L-seryl-[protein] + ADP + H(+). It carries out the reaction L-threonyl-[protein] + ATP = O-phospho-L-threonyl-[protein] + ADP + H(+). Upon extracellular signal or mitogen stimulation, phosphorylated at Thr-577 in the C-terminal kinase domain (CTKD) by MAPK1/ERK2 and MAPK3/ERK1. The activated CTKD then autophosphorylates Ser-386, allowing binding of PDPK1, which in turn phosphorylates Ser-227 in the N-terminal kinase domain (NTDK) leading to the full activation of the protein and subsequent phosphorylation of the substrates by the NTKD. Its function is as follows. Serine/threonine-protein kinase that acts downstream of ERK (MAPK1/ERK2 and MAPK3/ERK1) signaling and mediates mitogenic and stress-induced activation of the transcription factors CREB1, ETV1/ER81 and NR4A1/NUR77, regulates translation through RPS6 and EIF4B phosphorylation, and mediates cellular proliferation, survival, and differentiation by modulating mTOR signaling and repressing pro-apoptotic function of BAD and DAPK1. In fibroblast, is required for EGF-stimulated phosphorylation of CREB1 and histone H3 at 'Ser-10', which results in the subsequent transcriptional activation of several immediate-early genes. In response to mitogenic stimulation (EGF and PMA), phosphorylates and activates NR4A1/NUR77 and ETV1/ER81 transcription factors and the cofactor CREBBP. Upon insulin-derived signal, acts indirectly on the transcription regulation of several genes by phosphorylating GSK3B at 'Ser-9' and inhibiting its activity. Phosphorylates RPS6 in response to serum or EGF via an mTOR-independent mechanism and promotes translation initiation by facilitating assembly of the preinitiation complex. In response to insulin, phosphorylates EIF4B, enhancing EIF4B affinity for the EIF3 complex and stimulating cap-dependent translation. Is involved in the mTOR nutrient-sensing pathway by directly phosphorylating TSC2 at 'Ser-1798', which potently inhibits TSC2 ability to suppress mTOR signaling, and mediates phosphorylation of RPTOR, which regulates mTORC1 activity and may promote rapamycin-sensitive signaling independently of the PI3K/AKT pathway. Mediates cell survival by phosphorylating the pro-apoptotic proteins BAD and DAPK1 and suppressing their pro-apoptotic function. Promotes the survival of hepatic stellate cells by phosphorylating CEBPB in response to the hepatotoxin carbon tetrachloride (CCl4). Is involved in cell cycle regulation by phosphorylating the CDK inhibitor CDKN1B, which promotes CDKN1B association with 14-3-3 proteins and prevents its translocation to the nucleus and inhibition of G1 progression. In LPS-stimulated dendritic cells, is involved in TLR4-induced macropinocytosis, and in myeloma cells, acts as effector of FGFR3-mediated transformation signaling, after direct phosphorylation at Tyr-529 by FGFR3. Negatively regulates EGF-induced MAPK1/3 phosphorylation via phosphorylation of SOS1. Phosphorylates SOS1 at 'Ser-1134' and 'Ser-1161' that create YWHAB and YWHAE binding sites and which contribute to the negative regulation of MAPK1/3 phosphorylation. Phosphorylates EPHA2 at 'Ser-897', the RPS6KA-EPHA2 signaling pathway controls cell migration. Acts as a regulator of osteoblast differentiation by mediating phosphorylation of ATF4, thereby promoting ATF4 transactivation activity. The chain is Ribosomal protein S6 kinase alpha-3 (RPS6KA3) from Homo sapiens (Human).